The chain runs to 401 residues: Multidrug resistance protein MdtH (401 aa).

The Cytoplasmic segment spans residues 1–12 (MSRVSQARNLGK). The chain crosses the membrane as a helical span at residues 13-33 (YFLLIDNMLVVLGFFVVFPLV). At 34–98 (SIRFVDQMGW…GFATMGIAHE (65 aa)) the chain is on the periplasmic side. Residues 99-116 (PWLLWFSCLLSGLGGTLF) traverse the membrane as a helical segment. The Cytoplasmic portion of the chain corresponds to 117 to 137 (DPPRSALVVKLMPQQRGRFFS). A helical membrane pass occupies residues 138–158 (LLMMQDSAGAVIGALLGSWLL). The Periplasmic segment spans residues 159–163 (QYDFR). The chain crosses the membrane as a helical span at residues 164-184 (LVCATGAVLFVLCAAFNAWLL). Over 185–212 (PAWKLSTIRTPVREGMTRVMRDKRFVTY) the chain is Cytoplasmic. Residues 213–233 (VLTLAGYYMLAVQVMLMLPIM) traverse the membrane as a helical segment. Residues 234-242 (VNDVAGAPS) lie on the Periplasmic side of the membrane. A helical transmembrane segment spans residues 243–263 (AVKWMYAIEACLSLTLLYPIA). Residues 264–275 (RWSEKHFRLEHR) lie on the Cytoplasmic side of the membrane. A helical membrane pass occupies residues 276-296 (LMAGLLIMSLSMMPVGMVSGL). The Periplasmic portion of the chain corresponds to 297–298 (QQ). Residues 299-319 (LFTLICLFYIGSIIAEPARET) traverse the membrane as a helical segment. At 320-338 (LSASLADARARGSYMGFSR) the chain is on the cytoplasmic side. Residues 339–359 (LGLAIGGTIGYIGGGWLFDLG) traverse the membrane as a helical segment. Residues 360 to 366 (KSAHQPE) are Periplasmic-facing. Residues 367–387 (LPWMMLGIIGIFTFLALGWQF) form a helical membrane-spanning segment. Residues 388-401 (SQKRAARRLLERDA) lie on the Cytoplasmic side of the membrane.

This sequence belongs to the major facilitator superfamily. DHA1 family. MdtH (TC 2.A.1.2.21) subfamily.

Its subcellular location is the cell inner membrane. In Shigella dysenteriae serotype 1 (strain Sd197), this protein is Multidrug resistance protein MdtH.